A 248-amino-acid chain; its full sequence is Anamorsin homolog (248 aa).

Positions 4-130 (FKGLQKSLYI…ETGSSARLSF (127 aa)) are N-terminal SAM-like domain. Residues 131–161 (AKKTSSVNVWKISGDDEELIDEEELLDEEDK) are linker. [2Fe-2S] cluster-binding residues include Cys172, Cys181, Cys184, and Cys186. A fe-S binding site A region spans residues 172 to 186 (CSTTGKRKACKNCSC). [4Fe-4S] cluster is bound by residues Cys209, Cys212, Cys220, and Cys223. 2 consecutive short sequence motifs (cx2C motif) follow at residues 209–212 (CGNC) and 220–223 (CSTC). The interval 209-223 (CGNCYLGDAFRCSTC) is fe-S binding site B.

Belongs to the anamorsin family. In terms of assembly, monomer. The cofactor is [2Fe-2S] cluster. [4Fe-4S] cluster is required as a cofactor.

It localises to the cytoplasm. The protein resides in the mitochondrion intermembrane space. Its function is as follows. Component of the cytosolic iron-sulfur (Fe-S) protein assembly (CIA) machinery. Required for the maturation of extramitochondrial Fe-S proteins. Part of an electron transfer chain functioning in an early step of cytosolic Fe-S biogenesis, facilitating the de novo assembly of a [4Fe-4S] cluster on the cytosolic Fe-S scaffold complex. Electrons are transferred from NADPH via a FAD- and FMN-containing diflavin oxidoreductase. Together with the diflavin oxidoreductase, also required for the assembly of the diferric tyrosyl radical cofactor of ribonucleotide reductase (RNR), probably by providing electrons for reduction during radical cofactor maturation in the catalytic small subunit. The sequence is that of Anamorsin homolog from Drosophila virilis (Fruit fly).